A 204-amino-acid polypeptide reads, in one-letter code: B9 domain-containing protein 1 (204 aa).

A C2 B9-type domain is found at 9–127 (FLLMVNGQVE…TIPMFVPEST (119 aa)). Positions 182 to 204 (GYDTGPSDTQGVLGPSPPQSFPQ) are disordered.

Belongs to the B9D family. As to quaternary structure, part of the tectonic-like complex (also named B9 complex).

The protein localises to the cytoplasm. Its subcellular location is the cytoskeleton. It is found in the cilium basal body. The protein resides in the cilium axoneme. Functionally, component of the tectonic-like complex, a complex localized at the transition zone of primary cilia and acting as a barrier that prevents diffusion of transmembrane proteins between the cilia and plasma membranes. Required for ciliogenesis and sonic hedgehog/SHH signaling. This chain is B9 domain-containing protein 1 (B9D1), found in Homo sapiens (Human).